The primary structure comprises 154 residues: Probable ubiquitin-conjugating enzyme E2 31 (154 aa).

A UBC core domain is found at 8-153 (KAAQRIAMEY…AREFTARHAN (146 aa)). Cysteine 91 (glycyl thioester intermediate) is an active-site residue.

Belongs to the ubiquitin-conjugating enzyme family.

It carries out the reaction S-ubiquitinyl-[E1 ubiquitin-activating enzyme]-L-cysteine + [E2 ubiquitin-conjugating enzyme]-L-cysteine = [E1 ubiquitin-activating enzyme]-L-cysteine + S-ubiquitinyl-[E2 ubiquitin-conjugating enzyme]-L-cysteine.. It participates in protein modification; protein ubiquitination. In terms of biological role, accepts the ubiquitin from the E1 complex and catalyzes its covalent attachment to other proteins. This is Probable ubiquitin-conjugating enzyme E2 31 (UBC31) from Arabidopsis thaliana (Mouse-ear cress).